We begin with the raw amino-acid sequence, 321 residues long: Glucokinase (321 aa).

8–13 (GDVGGT) lines the ATP pocket.

Belongs to the bacterial glucokinase family.

The protein localises to the cytoplasm. It catalyses the reaction D-glucose + ATP = D-glucose 6-phosphate + ADP + H(+). This chain is Glucokinase, found in Klebsiella pneumoniae (strain 342).